A 443-amino-acid chain; its full sequence is Adenylyltransferase and sulfurtransferase UBA4 (443 aa).

ATP-binding positions include G81, D102, S109–R113, K126, and D170–S171. Zn(2+)-binding residues include C212 and C215. Residue C229 is the Glycyl thioester intermediate; for adenylyltransferase activity of the active site. Zn(2+) contacts are provided by C290 and C293. The Rhodanese domain maps to K342–P441. The active-site Cysteine persulfide intermediate; for sulfurtransferase activity is C400.

In the N-terminal section; belongs to the HesA/MoeB/ThiF family. UBA4 subfamily. It depends on Zn(2+) as a cofactor.

It is found in the cytoplasm. Its subcellular location is the cytosol. The protein operates within tRNA modification; 5-methoxycarbonylmethyl-2-thiouridine-tRNA biosynthesis. Its function is as follows. Plays a central role in 2-thiolation of mcm(5)S(2)U at tRNA wobble positions of cytosolic tRNA(Lys), tRNA(Glu) and tRNA(Gln). Acts by mediating the C-terminal thiocarboxylation of sulfur carrier URM1. Its N-terminus first activates URM1 as acyl-adenylate (-COAMP), then the persulfide sulfur on the catalytic cysteine is transferred to URM1 to form thiocarboxylation (-COSH) of its C-terminus. The reaction probably involves hydrogen sulfide that is generated from the persulfide intermediate and that acts as a nucleophile towards URM1. Subsequently, a transient disulfide bond is formed. Does not use thiosulfate as sulfur donor; NFS1 probably acting as a sulfur donor for thiocarboxylation reactions. Prior mcm(5) tRNA modification by the elongator complex is required for 2-thiolation. May also be involved in protein urmylation. The protein is Adenylyltransferase and sulfurtransferase UBA4 of Eremothecium gossypii (strain ATCC 10895 / CBS 109.51 / FGSC 9923 / NRRL Y-1056) (Yeast).